Here is a 919-residue protein sequence, read N- to C-terminus: Rho guanine nucleotide exchange factor 1 (919 aa).

In terms of domain architecture, RGSL spans 39-230 (DQNSQFQSLE…SLYMRHLGVR (192 aa)). The interval 247 to 402 (VMGNRRSDEP…PPGWRELVPS (156 aa)) is disordered. Residues 281 to 310 (DCRHLKVEVDEKPGPADRKGSLGISSRDRT) show a composition bias toward basic and acidic residues. Residues 363 to 379 (STEDNGETESPEPGDDG) show a composition bias toward acidic residues. Ser-372 is subject to Phosphoserine. One can recognise a DH domain in the interval 414–603 (KRQEVISELL…REILHHVNQA (190 aa)). A PH domain is found at 645–758 (KLVHEGPLTW…WCALITETAG (114 aa)). Thr-693 carries the post-translational modification Phosphothreonine. Tyr-736 carries the post-translational modification Phosphotyrosine; by JAK2. Disordered stretches follow at residues 761–800 (KVPA…PADA) and 839–865 (TEED…PTHT). Low complexity predominate over residues 775–787 (PSSTREPLLSSSE). The stretch at 864-893 (HTQEVEENLLSLEVVIKQLEELEEEFCRLR) forms a coiled coil. The residue at position 904 (Ser-904) is a Phosphoserine.

In terms of assembly, interacts with RHOA, GNA12 and GNA13. Homooligomerizes through the coiled coil region. Interacts with CTNNAL1. May interact with CCPG1. In terms of processing, phosphorylated by PKCA. Angiotensin-2 induced Tyr-736 phosphorylation is mediated by JAK2.

Its subcellular location is the cytoplasm. The protein resides in the membrane. Seems to play a role in the regulation of RhoA GTPase by guanine nucleotide-binding alpha-12 (GNA12) and alpha-13 (GNA13) subunits. Acts as a GTPase-activating protein (GAP) for GNA12 and GNA13, and as guanine nucleotide exchange factor (GEF) for RhoA GTPase. Activated G alpha 13/GNA13 stimulates the RhoGEF activity through interaction with the RGS-like domain. This GEF activity is inhibited by binding to activated GNA12. Mediates angiotensin-2-induced RhoA activation. In lymphoid follicles, may trigger activation of GNA13 as part of S1PR2-dependent signaling pathway that leads to inhibition of germinal center (GC) B cell growth and migration outside the GC niche. This chain is Rho guanine nucleotide exchange factor 1 (Arhgef1), found in Rattus norvegicus (Rat).